Reading from the N-terminus, the 299-residue chain is Acetaldehyde dehydrogenase 2 (299 aa).

The Acyl-thioester intermediate role is filled by C130. NAD(+) contacts are provided by residues 161–169 (SVGPGTRKN) and N272.

This sequence belongs to the acetaldehyde dehydrogenase family.

The catalysed reaction is acetaldehyde + NAD(+) + CoA = acetyl-CoA + NADH + H(+). The sequence is that of Acetaldehyde dehydrogenase 2 from Burkholderia lata (strain ATCC 17760 / DSM 23089 / LMG 22485 / NCIMB 9086 / R18194 / 383).